Reading from the N-terminus, the 349-residue chain is Draxin (349 aa).

Positions Met-1–Ala-25 are cleaved as a signal peptide. Positions Asn-40 to Arg-53 are enriched in polar residues. 3 disordered regions span residues Asn-40–Ala-63, Pro-119–Lys-166, and Trp-246–Pro-273. Residues Ser-54–Ala-63 show a composition bias toward basic residues. Basic and acidic residues predominate over residues Pro-119–Glu-139. Composition is skewed to basic residues over residues Gln-140–Lys-155 and Ala-249–Lys-258. An N-linked (GlcNAc...) asparagine glycan is attached at Asn-264.

This sequence belongs to the draxin family.

Its subcellular location is the secreted. Chemorepulsive axon guidance protein required for the development of spinal cord and forebrain commissures. Acts as a chemorepulsive guidance protein for commissural axons during development. Able to inhibit or repel neurite outgrowth from dorsal spinal cord and cortical explants in vitro. Binds directly to the neurites and growth cones. The chain is Draxin from Gallus gallus (Chicken).